Here is a 125-residue protein sequence, read N- to C-terminus: Small ribosomal subunit protein uS13 (125 aa).

This sequence belongs to the universal ribosomal protein uS13 family. Part of the 30S ribosomal subunit. Forms a loose heterodimer with protein S19. Forms two bridges to the 50S subunit in the 70S ribosome.

Functionally, located at the top of the head of the 30S subunit, it contacts several helices of the 16S rRNA. In the 70S ribosome it contacts the 23S rRNA (bridge B1a) and protein L5 of the 50S subunit (bridge B1b), connecting the 2 subunits; these bridges are implicated in subunit movement. Contacts the tRNAs in the A and P-sites. In Rickettsia typhi (strain ATCC VR-144 / Wilmington), this protein is Small ribosomal subunit protein uS13.